The sequence spans 1424 residues: MANSYLSSCANVMVERINTSQELVELCKGKSSSALLKRLKVALVTANPVLADADQRAEHVREVKHWLTGIKDAFFQAEDILDELQTEALRRRVVAEAGGLGGLFQNLMAGREAIQKKIEPKMEKVVRLLEHHVKHIEVIGLKEYSETREPQWRQASRSRPDDLPQGRLVGRVEDKLALVNLLLSDDEISIGKPAVISVVGMPGVGKTTLTEIVFNDYRVTEHFEVKMWISAGINFNVFTVTKAVLQDITSSAVNTEDLPSLQIQLKKTLSGKRFLLVLDDFWSESDSEWESFQVAFTDAEEGSKIVLTTRSEIVSTVAKAEKIYQMKLMTNEECWELISRFAFGNISVGSINQELEGIGKRIAEQCKGLPLAARAIASHLRSKPNPDDWYAVSKNFSSYTNSILPVLKLSYDSLPPQLKRCFALCSIFPKGHVFDREELVLLWMAIDLLYQPRSSRRLEDIGNDYLGDLVAQSFFQRLDITMTSFVMHDLMNDLAKAVSGDFCFRLEDDNIPEIPSTTRHFSFSRSQCDASVAFRSICGAEFLRTILPFNSPTSLESLQLTEKVLNPLLNALSGLRILSLSHYQITNLPKSLKGLKLLRYLDLSSTKIKELPEFVCTLCNLQTLLLSNCRDLTSLPKSIAELINLRLLDLVGTPLVEMPPGIKKLRSLQKLSNFVIGRLSGAGLHELKELSHLRGTLRISELQNVAFASEAKDAGLKRKPFLDGLILKWTVKGSGFVPGSFNALACDQKEVLRMLEPHPHLKTFCIESYQGGAFPKWLGDSSFFGITSVTLSSCNLCISLPPVGQLPSLKYLSIEKFNILQKVGLDFFFGENNSRGVPFQSLQILKFYGMPRWDEWICPELEDGIFPCLQKLIIQRCPSLRKKFPEGLPSSTEVTISDCPLRAVSGGENSFRRSLTNIPESPASIPSMSRRELSSPTGNPKSDASTSAQPGFASSSQSNDDNEVTSTSSLSSLPKDRQTEDFDQYETQLGSLPQQFEEPAVISARYSGYISDIPSTLSPYMSRTSLVPDPKNEGSILPGSSSYQYHQYGIKSSVPSPRSSEAIKPSQYDDDETDMEYLKVTDISHLMELPQNLQSLHIDSCDGLTSLPENLTESYPNLHELLIIACHSLESFPGSHPPTTLKTLYIRDCKKLNFTESLQPTRSYSQLEYLFIGSSCSNLVNFPLSLFPKLRSLSIRDCESFKTFSIHAGLGDDRIALESLEIRDCPNLETFPQGGLPTPKLSSMLLSNCKKLQALPEKLFGLTSLLSLFIIKCPEIETIPGGGFPSNLRTLCISLCDKLTPRIEWGLRDLENLRNLEIDGGNEDIESFPEEGLLPKSVFSLRISRFENLKTLNRKGFHDTKAIETMEISGCDKLQISIDEDLPPLSCLRISSCSLLTETFAEVETEFFKVLNIPYVEIDGEIFS.

The NB-ARC domain occupies 152–454; the sequence is WRQASRSRPD…AIDLLYQPRS (303 aa). An ATP-binding site is contributed by 200–207; that stretch reads GMPGVGKT. LRR repeat units follow at residues 498-523, 552-571, 572-595, 597-618, 620-641, 642-665, and 806-830; these read VSGD…HFSF, PTSL…LLNA, LSGL…LKGL, LLRY…VCTL, NLQT…SIAE, LINL…IKKL, and LPSL…FFFG. 2 disordered regions span residues 911–977 and 1050–1070; these read FRRS…PKDR and IKSS…QYDD. Polar residues-rich tracts occupy residues 912-927 and 934-972; these read RRSL…SIPS and SSPT…SLSS. LRR repeat units follow at residues 1090–1114, 1118–1139, 1238–1262, 1264–1286, and 1310–1336; these read PQNL…LTES, LHEL…HPPT, TPKL…LFGL, SLLS…GFPS, and LENL…LLPK.

Belongs to the disease resistance NB-LRR family.

In terms of biological role, potential disease resistance protein. This is Putative disease resistance protein At3g14460 from Arabidopsis thaliana (Mouse-ear cress).